The following is a 91-amino-acid chain: Cell division protein FtsB (91 aa).

Over 1–3 (MKW) the chain is Cytoplasmic. The helical transmembrane segment at 4 to 21 (LVAVLVVFVAMFQYRLWV) threads the bilayer. The Periplasmic segment spans residues 22-91 (GEGSIADVVR…ETFFMIIDDQ (70 aa)). A coiled-coil region spans residues 23–63 (EGSIADVVRLEREIARQEADNERLRERNKQLAAEVDALKTG).

It belongs to the FtsB family. As to quaternary structure, part of a complex composed of FtsB, FtsL and FtsQ.

Its subcellular location is the cell inner membrane. Its function is as follows. Essential cell division protein. May link together the upstream cell division proteins, which are predominantly cytoplasmic, with the downstream cell division proteins, which are predominantly periplasmic. The polypeptide is Cell division protein FtsB (Teredinibacter turnerae (strain ATCC 39867 / T7901)).